We begin with the raw amino-acid sequence, 276 residues long: Rhomboid protease GlpG (276 aa).

Transmembrane regions (helical) follow at residues 94–114, 142–162, 169–189, 192–212, 229–249, and 250–270; these read GPVT…MQIL, ALMH…WYLG, LGSG…GYVQ, FSGP…GYVW, LIIF…GMSM, and ANGA…VDSL. Ser-201 serves as the catalytic Nucleophile. His-254 is an active-site residue.

It belongs to the peptidase S54 family.

The protein resides in the cell inner membrane. It catalyses the reaction Cleaves type-1 transmembrane domains using a catalytic dyad composed of serine and histidine that are contributed by different transmembrane domains.. Rhomboid-type serine protease that catalyzes intramembrane proteolysis. This is Rhomboid protease GlpG from Shigella flexneri serotype 5b (strain 8401).